The chain runs to 129 residues: Cytochrome c3 (129 aa).

A signal peptide spans 1–22 (MRKLFFCGVLALAVAFALPVVA). Heme c-binding residues include His44, His47, Cys52, Cys55, His56, His57, Cys68, Cys73, His74, His92, Cys101, Cys104, His105, Cys122, Cys127, and His128.

In terms of processing, binds 4 heme c groups per subunit.

It is found in the periplasm. In terms of biological role, participates in sulfate respiration coupled with phosphorylation by transferring electrons from the enzyme dehydrogenase to ferredoxin. This Nitratidesulfovibrio vulgaris (strain ATCC 29579 / DSM 644 / CCUG 34227 / NCIMB 8303 / VKM B-1760 / Hildenborough) (Desulfovibrio vulgaris) protein is Cytochrome c3.